Consider the following 126-residue polypeptide: Histone H2B type 1-O (126 aa).

Residues 1–12 (MPDPAKSAPAPK) are compositionally biased toward low complexity. The interval 1–35 (MPDPAKSAPAPKKGSKKAVTKAQKKDGKKRKRSRK) is disordered. Pro-2 is modified (N-acetylproline; partial). Lys-6 is subject to N6-(2-hydroxyisobutyryl)lysine; alternate. At Lys-6 the chain carries N6-(beta-hydroxybutyryl)lysine; alternate. Lys-6 is modified (N6-acetyllysine; alternate). Lys-6 bears the N6-butyryllysine; alternate mark. An N6-crotonyllysine; alternate modification is found at Lys-6. The residue at position 6 (Lys-6) is an N6-lactoyllysine; alternate. A Glycyl lysine isopeptide (Lys-Gly) (interchain with G-Cter in SUMO2); alternate cross-link involves residue Lys-6. Residue Ser-7 is modified to ADP-ribosylserine. The residue at position 12 (Lys-12) is an N6-(beta-hydroxybutyryl)lysine; alternate. Lys-12 and Lys-13 each carry N6-acetyllysine; alternate. An N6-crotonyllysine; alternate mark is found at Lys-12 and Lys-13. Residue Lys-12 is modified to N6-lactoyllysine; alternate. An N6-(2-hydroxyisobutyryl)lysine; alternate modification is found at Lys-13. Phosphoserine; by STK4/MST1 is present on Ser-15. Residues Lys-16, Lys-17, Lys-21, and Lys-24 each carry the N6-acetyllysine; alternate modification. An N6-crotonyllysine; alternate mark is found at Lys-16, Lys-17, Lys-21, and Lys-24. N6-lactoyllysine; alternate occurs at positions 16, 17, 21, and 24. N6-(beta-hydroxybutyryl)lysine; alternate occurs at positions 17 and 21. Lys-17 carries the N6-glutaryllysine; alternate modification. N6-(2-hydroxyisobutyryl)lysine; alternate is present on residues Lys-21 and Lys-24. The residue at position 21 (Lys-21) is an N6-butyryllysine; alternate. Lys-21 is covalently cross-linked (Glycyl lysine isopeptide (Lys-Gly) (interchain with G-Cter in SUMO2); alternate). Lys-25 carries the N6-(2-hydroxyisobutyryl)lysine modification. An N6-(2-hydroxyisobutyryl)lysine; alternate modification is found at Lys-35. N6-(beta-hydroxybutyryl)lysine; alternate is present on Lys-35. Lys-35 carries the N6-crotonyllysine; alternate modification. An N6-glutaryllysine; alternate modification is found at Lys-35. Lys-35 carries the post-translational modification N6-succinyllysine; alternate. Residue Lys-35 forms a Glycyl lysine isopeptide (Lys-Gly) (interchain with G-Cter in ubiquitin); alternate linkage. Glu-36 carries the post-translational modification PolyADP-ribosyl glutamic acid. Residue Ser-37 is modified to Phosphoserine; by AMPK. Residues Lys-44, Lys-47, and Lys-58 each carry the N6-(2-hydroxyisobutyryl)lysine; alternate modification. Lys-44 is modified (N6-lactoyllysine; alternate). N6-glutaryllysine; alternate occurs at positions 44 and 47. Lys-47 is modified (N6-methyllysine; alternate). Position 58 is an N6,N6-dimethyllysine; alternate (Lys-58). Arg-80 carries the post-translational modification Dimethylated arginine. At Lys-86 the chain carries N6-(2-hydroxyisobutyryl)lysine; alternate. Lys-86 carries the N6-(beta-hydroxybutyryl)lysine; alternate modification. Lys-86 carries the post-translational modification N6-acetyllysine; alternate. Lys-86 is subject to N6-lactoyllysine; alternate. Lys-86 carries the post-translational modification N6,N6,N6-trimethyllysine; alternate. Omega-N-methylarginine is present on residues Arg-87 and Arg-93. Lys-109 carries the N6-(2-hydroxyisobutyryl)lysine; alternate modification. Lys-109 bears the N6-lactoyllysine; alternate mark. Position 109 is an N6-glutaryllysine; alternate (Lys-109). Position 109 is an N6-methyllysine; alternate (Lys-109). Ser-113 is a glycosylation site (O-linked (GlcNAc) serine). Phosphothreonine is present on Thr-116. N6-(2-hydroxyisobutyryl)lysine; alternate is present on residues Lys-117 and Lys-121. N6-(beta-hydroxybutyryl)lysine; alternate is present on residues Lys-117 and Lys-121. N6-lactoyllysine; alternate is present on residues Lys-117 and Lys-121. An N6-glutaryllysine; alternate mark is found at Lys-117 and Lys-121. Residues Lys-117 and Lys-121 each carry the N6-succinyllysine; alternate modification. The residue at position 117 (Lys-117) is an N6-malonyllysine; alternate. At Lys-117 the chain carries N6-methylated lysine; alternate. A Glycyl lysine isopeptide (Lys-Gly) (interchain with G-Cter in ubiquitin); alternate cross-link involves residue Lys-121.

The protein belongs to the histone H2B family. As to quaternary structure, the nucleosome is a histone octamer containing two molecules each of H2A, H2B, H3 and H4 assembled in one H3-H4 heterotetramer and two H2A-H2B heterodimers. The octamer wraps approximately 147 bp of DNA. Post-translationally, monoubiquitination at Lys-35 (H2BK34Ub) by the MSL1/MSL2 dimer is required for histone H3 'Lys-4' (H3K4me) and 'Lys-79' (H3K79me) methylation and transcription activation at specific gene loci, such as HOXA9 and MEIS1 loci. Similarly, monoubiquitination at Lys-121 (H2BK120Ub) by the RNF20/40 complex gives a specific tag for epigenetic transcriptional activation and is also prerequisite for histone H3 'Lys-4' and 'Lys-79' methylation. It also functions cooperatively with the FACT dimer to stimulate elongation by RNA polymerase II. H2BK120Ub also acts as a regulator of mRNA splicing: deubiquitination by USP49 is required for efficient cotranscriptional splicing of a large set of exons. In terms of processing, phosphorylation at Ser-37 (H2BS36ph) by AMPK in response to stress promotes transcription. Phosphorylated on Ser-15 (H2BS14ph) by STK4/MST1 during apoptosis; which facilitates apoptotic chromatin condensation. Also phosphorylated on Ser-15 in response to DNA double strand breaks (DSBs), and in correlation with somatic hypermutation and immunoglobulin class-switch recombination. GlcNAcylation at Ser-113 promotes monoubiquitination of Lys-121. It fluctuates in response to extracellular glucose, and associates with transcribed genes. Post-translationally, ADP-ribosylated by PARP1 or PARP2 on Ser-7 (H2BS6ADPr) in response to DNA damage. H2BS6ADPr promotes recruitment of CHD1L. Poly ADP-ribosylation on Glu-36 (H2BE35ADPr) by PARP1 regulates adipogenesis: it inhibits phosphorylation at Ser-37 (H2BS36ph), thereby blocking expression of pro-adipogenetic genes. In terms of processing, crotonylation (Kcr) is specifically present in male germ cells and marks testis-specific genes in post-meiotic cells, including X-linked genes that escape sex chromosome inactivation in haploid cells. Crotonylation marks active promoters and enhancers and confers resistance to transcriptional repressors. It is also associated with post-meiotically activated genes on autosomes. Lactylated in macrophages by EP300/P300 by using lactoyl-CoA directly derived from endogenous or exogenous lactate, leading to stimulates gene transcription.

Its subcellular location is the nucleus. It is found in the chromosome. Its function is as follows. Core component of nucleosome. Nucleosomes wrap and compact DNA into chromatin, limiting DNA accessibility to the cellular machineries which require DNA as a template. Histones thereby play a central role in transcription regulation, DNA repair, DNA replication and chromosomal stability. DNA accessibility is regulated via a complex set of post-translational modifications of histones, also called histone code, and nucleosome remodeling. This chain is Histone H2B type 1-O, found in Homo sapiens (Human).